A 97-amino-acid polypeptide reads, in one-letter code: uncharacterized protein (97 aa).

The interval 27-50 is disordered; it reads IGESEDKTNSRGQPATMKEDEVED.

This is an uncharacterized protein from Caldicellulosiruptor saccharolyticus (Caldocellum saccharolyticum).